The primary structure comprises 1934 residues: Tudor domain-containing protein 15 (1934 aa).

6 Tudor domains span residues 59–117 (NVEI…LFEL), 289–347 (CDNF…FILV), 531–589 (KPEP…FCEL), 799–856 (PYEI…FLLL), 1011–1070 (DSNK…FPEL), and 1342–1401 (KPLV…FLTV). The segment at 1490–1510 (VRPGDNEMKKGKSNESEGSMN) is disordered. Residues 1491 to 1504 (RPGDNEMKKGKSNE) are compositionally biased toward basic and acidic residues. 2 Tudor domains span residues 1574-1633 (SIEK…IRNI) and 1780-1838 (FIIP…PEEL).

The polypeptide is Tudor domain-containing protein 15 (TDRD15) (Homo sapiens (Human)).